The primary structure comprises 69 residues: MKNSAAREAFKGANHPAGMVSEEELKALVGGNDVNPETTPATTSSWTCITAGVTVSASLCPTTKCTSRC.

The propeptide occupies 1–37 (MKNSAAREAFKGANHPAGMVSEEELKALVGGNDVNPE). At T38 the chain carries 2-oxobutanoic acid. Residues T39, T42, and T43 each carry the (Z)-2,3-didehydrobutyrine modification. Residues 44–48 (SSWTC) constitute a cross-link (lanthionine (Ser-Cys)). S45 carries the 2,3-didehydroalanine (Ser) modification. A (Z)-2,3-didehydrobutyrine mark is found at T50 and T54. The segment at residues 56 to 60 (SASLC) is a cross-link (lanthionine (Ser-Cys)). 2 cross-links (beta-methyllanthionine (Thr-Cys)) span residues 62-65 (TTKC) and 66-69 (TSRC). At T63 the chain carries (Z)-2,3-didehydrobutyrine.

Maturation of lantibiotics involves the enzymatic conversion of Thr, and Ser into dehydrated AA and the formation of thioether bonds with cysteine. This is followed by membrane translocation and cleavage of the modified precursor.

It is found in the secreted. The protein resides in the cell wall. In terms of biological role, lanthionine-containing peptide antibiotic (lantibiotic) active on Gram-positive bacteria. The bactericidal activity of lantibiotics is based on depolarization of energized bacterial cytoplasmic membranes, initiated by the formation of aqueous transmembrane pores. When present individually, LchA2 exhibits activity towards L.lactis HP. When combined with LchA1, it displays activity towards a broad spectrum of non-pathogenic and pathogenic Gram-positive bacteria including strains of L.monocytogenes, methicillin-resistant S.aureus, S.pneumoniae and strains of vancomycin-resistant enterococci, but not towards E.faecium L4001 and BM4147-1. Combined LchA1 and LchA2 peptides also inhibit Bacillus sp. HIL-Y85/54728, L.lactis DPC3417 and B.halodurans C-125, which produce lantibiotics themselves. Inactivated by proteinase K and pronase E, but not by trypsin and chymotrypsin. The protein is Lantibiotic lichenicidin A2 of Bacillus licheniformis (strain ATCC 14580 / DSM 13 / JCM 2505 / CCUG 7422 / NBRC 12200 / NCIMB 9375 / NCTC 10341 / NRRL NRS-1264 / Gibson 46).